We begin with the raw amino-acid sequence, 521 residues long: MASSRASSTATKTKAPDDLVAPVVKKPHIYYGSLEEKERERLAKGESGILGKEGLKAGIEAGNINITSGEVFEIEEHISERQAEVLAEFERRKRARQINVSTDDSEVKACLRALGEPITLFGEGPAERRERLRNILSVVGTDALKKTKKDDEKSKKSKEEYQQTWYHEGPNSLKVARLWIANYSLPRAMKRLEEARLHKEIPETTRASQMQELHKSLRSLNNFCSQIGDDRPISYCHFSPNSKMLATACWSGLCKLWSVPDCNLLHTLRGHNTNVGAIVFHPKSTVSLDQKDVNLASCAADGSVKLWSLDSDEPVADIEGHTVRVARVMWHPSGRFLGTTCYDRSWRLWDLEAQEEILHQEGHSMGVYDIAFHQDGSLAGTGGLDAFGRVWDLRTGRCIMFLEGHLKEIYGINFSPNGYHIATGSGDNTCKVWDLRQRRCVYTIPAHQNLVTGVKFEPIHGNFLLTGAYDNTAKIWTHPGWSPLKTLAGHEGKVMGLDISSDGQLIATCSYDRTFKLWMAE.

N6-acetyllysine is present on lysine 26. 7 WD repeats span residues 228–267 (GDDR…LLHT), 270–317 (GHNT…PVAD), 320–359 (GHTV…EILH), 362–401 (GHSM…CIMF), 404–443 (GHLK…CVYT), 446–486 (AHQN…PLKT), and 489–521 (GHEG…WMAE).

Component of the precatalytic spliceosome (spliceosome B complex). Component of the U4/U6-U5 tri-snRNP complex, a building block of the precatalytic spliceosome (spliceosome B complex). The U4/U6-U5 tri-snRNP complex is composed of the U4, U6 and U5 snRNAs and at least PRPF3, PRPF4, PRPF6, PRPF8, PRPF31, SNRNP200, TXNL4A, SNRNP40, SNRPB, SNRPD1, SNRPD2, SNRPD3, SNRPE, SNRPF, SNRPG, DDX23, CD2BP2, PPIH, SNU13, EFTUD2, SART1 and USP39, plus LSM2, LSM3, LSM4, LSM5, LSM6, LSM7 and LSM8. Interacts directly with PRPF18, PPIH and PRPF3. Part of a heteromeric complex containing PPIH, PRPF3 and PRPF4 that is stable in the absence of RNA. Interacts with ERCC6.

The protein localises to the nucleus. It localises to the nucleus speckle. Functionally, plays a role in pre-mRNA splicing as component of the U4/U6-U5 tri-snRNP complex that is involved in spliceosome assembly, and as component of the precatalytic spliceosome (spliceosome B complex). The chain is U4/U6 small nuclear ribonucleoprotein Prp4 (PRPF4) from Pongo abelii (Sumatran orangutan).